Consider the following 267-residue polypeptide: Acyl-[acyl-carrier-protein]--UDP-N-acetylglucosamine O-acyltransferase (267 aa).

This sequence belongs to the transferase hexapeptide repeat family. LpxA subfamily. Homotrimer.

It is found in the cytoplasm. It carries out the reaction a (3R)-hydroxyacyl-[ACP] + UDP-N-acetyl-alpha-D-glucosamine = a UDP-3-O-[(3R)-3-hydroxyacyl]-N-acetyl-alpha-D-glucosamine + holo-[ACP]. It functions in the pathway glycolipid biosynthesis; lipid IV(A) biosynthesis; lipid IV(A) from (3R)-3-hydroxytetradecanoyl-[acyl-carrier-protein] and UDP-N-acetyl-alpha-D-glucosamine: step 1/6. Functionally, involved in the biosynthesis of lipid A, a phosphorylated glycolipid that anchors the lipopolysaccharide to the outer membrane of the cell. The protein is Acyl-[acyl-carrier-protein]--UDP-N-acetylglucosamine O-acyltransferase of Cupriavidus metallidurans (strain ATCC 43123 / DSM 2839 / NBRC 102507 / CH34) (Ralstonia metallidurans).